Consider the following 632-residue polypeptide: MHGLLLAAGLISLPLHVLAHPQPSSTSLAGRAVDLNEYRIGHRSSYTSNDEMMKQPSIASFRAGTYVEVATEMVKQTMPNMEFRLVDDHYIGQSGIGHVRFRQTMHGIDIDNSDFNVNIGQDGKVLSHGNSFYTGPAPESSPVQKRDFSDPMQALHGVRKALNLPIKAEGATVENMSEHKVMFKGTSGALSDPTAKLCYMAKEDGSLALTWRVETDIGDNWLLSYMDAKDTGKVHNVVDYVAHATFQVYKWGLADPTEGNREILTNPWNLQTSPLTWLADGQNNFTATRGNNAIAQYNPDGGNDYENNYRPSPKNLKFEYPYSANMDPPKTYIDASVTQLFYTSNVCHDLYYMLGFNEKAGNFQVNNRGQGGKGNDYVILNAQDGSGTNNANFATPPDGQPGRMRAYIWTRANPPRDASFEAGTIIHEYTHGLSNRLCGGPANSRCLNAIESGGMGEGWGDFYATAVRLKPKDTRKTNYVKGGWVNNSPKGVRMYPYSTDMSVNPLVYTSNNQLNEVHAIGTVWATMLYELLWNLIDKHGKNDGPVPIFKNGIPSDGKYLAMKIVMDGMAIQPCNPNFVQARDAILDADKNLTKASNKCEIWKAFAKRGLGVGAKFDPKNRIGSNEVPKECK.

The N-terminal stretch at M1–A19 is a signal peptide. A propeptide spanning residues H20–F246 is cleaved from the precursor. N-linked (GlcNAc...) asparagine glycosylation occurs at N284. A Zn(2+)-binding site is contributed by T430. The active site involves H431. S434 is a binding site for Zn(2+). Residue N591 is glycosylated (N-linked (GlcNAc...) asparagine).

The protein belongs to the peptidase M36 family. Zn(2+) is required as a cofactor.

The protein resides in the secreted. With respect to regulation, PMSF, soybean trypsin inhibitor (SBTI) and chymostatin strongly inhibit the proteinase. In terms of biological role, secreted metalloproteinase probably acting as a virulence factor. The sequence is that of Extracellular metalloproteinase 1 (MEP1) from Arthroderma otae (Microsporum canis).